Consider the following 426-residue polypeptide: Histidine--tRNA ligase (426 aa).

This sequence belongs to the class-II aminoacyl-tRNA synthetase family. In terms of assembly, homodimer.

Its subcellular location is the cytoplasm. The catalysed reaction is tRNA(His) + L-histidine + ATP = L-histidyl-tRNA(His) + AMP + diphosphate + H(+). The polypeptide is Histidine--tRNA ligase (Prochlorococcus marinus (strain AS9601)).